Here is a 303-residue protein sequence, read N- to C-terminus: Glycosyltransferase AglJ (303 aa).

The next 2 membrane-spanning stretches (helical) occupy residues 230–250 (FYFGSVGFASTATGLGLALYV) and 263–283 (VIAVVSMAGILFGVQLLMFGV).

The protein belongs to the glycosyltransferase 2 family.

The protein resides in the cell membrane. It participates in cell surface structure biogenesis; S-layer biogenesis. Functionally, involved in the assembly of a N-linked pentasaccharide that decorates the S-layer glycoprotein and flagellins. Adds the first hexose subunit of the pentasaccharide to the dolichol phosphate carrier. This is Glycosyltransferase AglJ (aglJ) from Haloferax volcanii (strain ATCC 29605 / DSM 3757 / JCM 8879 / NBRC 14742 / NCIMB 2012 / VKM B-1768 / DS2) (Halobacterium volcanii).